A 312-amino-acid polypeptide reads, in one-letter code: Aspartate carbamoyltransferase catalytic subunit (312 aa).

The carbamoyl phosphate site is built by arginine 58 and threonine 59. Lysine 86 serves as a coordination point for L-aspartate. The carbamoyl phosphate site is built by arginine 108, histidine 136, and glutamine 139. L-aspartate contacts are provided by arginine 169 and arginine 223. Carbamoyl phosphate is bound by residues glycine 264 and proline 265.

Belongs to the aspartate/ornithine carbamoyltransferase superfamily. ATCase family. Heterododecamer (2C3:3R2) of six catalytic PyrB chains organized as two trimers (C3), and six regulatory PyrI chains organized as three dimers (R2).

It carries out the reaction carbamoyl phosphate + L-aspartate = N-carbamoyl-L-aspartate + phosphate + H(+). It functions in the pathway pyrimidine metabolism; UMP biosynthesis via de novo pathway; (S)-dihydroorotate from bicarbonate: step 2/3. Its function is as follows. Catalyzes the condensation of carbamoyl phosphate and aspartate to form carbamoyl aspartate and inorganic phosphate, the committed step in the de novo pyrimidine nucleotide biosynthesis pathway. The protein is Aspartate carbamoyltransferase catalytic subunit of Endomicrobium trichonymphae.